We begin with the raw amino-acid sequence, 198 residues long: Transcriptional regulator GfcR (198 aa).

It belongs to the purine/pyrimidine phosphoribosyltransferase family. GfcR subfamily.

This Methanocorpusculum labreanum (strain ATCC 43576 / DSM 4855 / Z) protein is Transcriptional regulator GfcR.